The following is a 554-amino-acid chain: Chaperonin GroEL (554 aa).

ATP is bound by residues 30–33 (TLGP), K51, 87–91 (DGTTT), G415, 478–480 (DAA), and D494.

It belongs to the chaperonin (HSP60) family. As to quaternary structure, forms a cylinder of 14 subunits composed of two heptameric rings stacked back-to-back. Interacts with the co-chaperonin GroES.

The protein localises to the cytoplasm. It carries out the reaction ATP + H2O + a folded polypeptide = ADP + phosphate + an unfolded polypeptide.. Functionally, together with its co-chaperonin GroES, plays an essential role in assisting protein folding. The GroEL-GroES system forms a nano-cage that allows encapsulation of the non-native substrate proteins and provides a physical environment optimized to promote and accelerate protein folding. The sequence is that of Chaperonin GroEL from Pelobacter propionicus (strain DSM 2379 / NBRC 103807 / OttBd1).